The sequence spans 1368 residues: DNA-directed RNA polymerase subunit beta' (1368 aa).

A disordered region spans residues 1 to 38 (MTSSSKPARKTSKSKSKASKAAEAPAAPSNELSREAPT). The segment covering 7–18 (PARKTSKSKSKA) has biased composition (basic residues). Residues 19–29 (SKAAEAPAAPS) show a composition bias toward low complexity. C250, C318, C325, and C328 together coordinate Zn(2+). The tract at residues 1340 to 1368 (AGEELAEEHVPDPGALEGLQEEGLLSQDS) is disordered. The segment covering 1353–1368 (GALEGLQEEGLLSQDS) has biased composition (low complexity).

This sequence belongs to the RNA polymerase beta' chain family. RpoC2 subfamily. In terms of assembly, in cyanobacteria the RNAP catalytic core is composed of 2 alpha, 1 beta, 1 beta', 1 gamma and 1 omega subunit. When a sigma factor is associated with the core the holoenzyme is formed, which can initiate transcription. Requires Zn(2+) as cofactor.

The catalysed reaction is RNA(n) + a ribonucleoside 5'-triphosphate = RNA(n+1) + diphosphate. DNA-dependent RNA polymerase catalyzes the transcription of DNA into RNA using the four ribonucleoside triphosphates as substrates. The protein is DNA-directed RNA polymerase subunit beta' of Synechococcus sp. (strain RCC307).